The following is a 142-amino-acid chain: Putative pre-16S rRNA nuclease (142 aa).

The protein belongs to the YqgF nuclease family.

Its subcellular location is the cytoplasm. Could be a nuclease involved in processing of the 5'-end of pre-16S rRNA. The chain is Putative pre-16S rRNA nuclease from Saccharophagus degradans (strain 2-40 / ATCC 43961 / DSM 17024).